We begin with the raw amino-acid sequence, 1559 residues long: MASELGAGDDGSSTELAKPLYLQYLERALRLDHFLRQTSAIFNRNISSDDSEDGLDDNNPLLPESGDPLIQVKEEPPNSLLGETSGASSSGLLNPYSLNGVLQSESKSDKGNLYNFSKLKKSRKWLKSILLSDESSEADSQSEDNDDEEEELSLSREELHNMLRLHKYKKLHQNKYSKDKELQQYQYYSAGLLSTYDPFYEQQRHLLGPKKKKFKEDKKLKAKLKKVKKKRRRDEEFSSEESPRHHHHQTKVFAKFSHDAPPPGTKKKHLSIEQLNARRRKVWLSIVKKELPKANKQKSSARNLFLTNSRKLAHQCMKEVRRAALQAQKNCKETLPRARRLTKEMLLYWKKYEKVEKEHRKRAEKEALEQRKLDEEMREAKRQQRKLNFLITQTELYAHFMSRKRDMGHDGIQEEILRKLEDSSTQRQIDIGGGVVVNITQEDYDSNHFKAQALKNAENAYHIHQARTRSFDEDAKESRAAALRAADKSGSGFGESYSLANPSIRAGEDIPQPTIFNGKLKGYQLKGMNWLANLYEQGINGILADEMGLGKTVQSIALLAHLAERENIWGPFLIISPASTLNNWHQEFTRFVPKFKVLPYWGNPHDRKVIRRFWSQKTLYTQDAPFHVVITSYQLVVQDVKYFQRVKWQYMVLDEAQALKSSSSVRWKILLQFQCRNRLLLTGTPIQNTMAELWALLHFIMPTLFDSHEEFNEWFSKDIESHAENKSAIDENQLSRLHMILKPFMLRRIKKDVENELSDKIEILTYCQLTSRQKLLYQALKNKISIEDLLQSSMGSTQQAQNTTSSLMNLVMQFRKVCNHPELFERQETWSPFHISLKPYEISKFIYRHGQIRVFNHSRDRWLKVLLSPFAPDYIQQSLFHRKGINEGSCFSFLRFIDVSPAEMANLMLQGLLARWLALFLSLKASYRLHQLRSWAEPDGTSHQSYLRNKDFLLGVDFPLSFPNLCSCPLLKSLVFSSHCKAVSGYSDHVVHQRRSATSSLRCCLLTELPSFLCVASPRVTAVPLDSYCNDRSAEYERGVLKEGGSLAAKQCLLNGAPELATDWLSRRSQFFPEPAGGLLSIRPQNGWSFIRIPGKESLITDSGKLYALDVLLTRLKSQGHRVLIYSQMTRMIDLLEEYMVYRKHTYMRLDGSSKISERRDMVADFQTRNDIFVFLLSTRAGGLGINLTAADTVIFYDSDWNPTVDQQAMDRAHRLGQTKQVTVYRLICKGTIEERILQRAKEKSEIQRMVISGGNFKPDTLKPKEVVSLLLDDEELEKKLRLRQEEKRQQEESNRVKERKRKREKYAEKKKKEDELDGKRRKEGVNLVIPFVPSADNSNLSADGDDSFISVDSAMPSPFSEISISSELHTGSIPPDESSSDMLVIVDDPASSAPQSRATNSPASITGSVSDTVNGISIQEVPAAGRGHSARSRGRPKGSGSTAKGAGKGRSRKSTAGSAAAMAGAKAGAAAASAAAYAAYGYNVSKGISASSPLQTSIVRPAGLADFGPSSASSPLSSPLNKGNNIPGTPKSLHMTSSLASDSLIRKQGKGTNPSGGR.

The segment at 1–268 (MASELGAGDD…DAPPPGTKKK (268 aa)) is assembles INO80 complex module with putative regulatory components INO80E, INO80F, UCHL5, NFRKB, MCRS1 and IN80D. Positions 46–88 (ISSDDSEDGLDDNNPLLPESGDPLIQVKEEPPNSLLGETSGAS) are disordered. K118 is modified (N6-acetyllysine). The disordered stretch occupies residues 213–250 (KFKEDKKLKAKLKKVKKKRRRDEEFSSEESPRHHHHQT). Positions 214-528 (FKEDKKLKAK…KLKGYQLKGM (315 aa)) are assembles INO80 complex module consisting of conserved components ACTR8, ACTL6A and YY1. Residues 220 to 232 (LKAKLKKVKKKRR) are compositionally biased toward basic residues. A DBINO domain is found at 282–407 (VWLSIVKKEL…AHFMSRKRDM (126 aa)). The interval 523–1559 (YQLKGMNWLA…GKGTNPSGGR (1037 aa)) is assembles INO80 complex module consisting of conserved components INO80B, INO80C, ACTR5, RVBL1, RVBL2. The Helicase ATP-binding domain occupies 532–703 (ANLYEQGING…WALLHFIMPT (172 aa)). 545–552 (DEMGLGKT) provides a ligand contact to ATP. The Helicase C-terminal domain occupies 1108–1263 (ALDVLLTRLK…GGNFKPDTLK (156 aa)). 2 stretches are compositionally biased toward basic and acidic residues: residues 1285-1297 (QEEK…SNRV) and 1306-1319 (KYAE…ELDG). 3 disordered regions span residues 1285 to 1319 (QEEK…ELDG), 1391 to 1464 (ASSA…AAMA), and 1504 to 1559 (GLAD…SGGR). A compositionally biased stretch (polar residues) spans 1393–1418 (SAPQSRATNSPASITGSVSDTVNGIS). Residues 1510-1521 (PSSASSPLSSPL) are compositionally biased toward low complexity. S1515 is subject to Phosphoserine.

It belongs to the SNF2/RAD54 helicase family. As to quaternary structure, component of the chromatin remodeling INO80 complex; three different complex modules assemble on different domains of INO80. Interacts with DDB1. Interacts with transcriptional repressor protein YY1; the interaction recruits the INO80 complex to YY1 target genes. Interacts with YY1AP1. Interacts with tubulin alpha. As to expression, widely expressed.

Its subcellular location is the cytoplasm. It is found in the nucleus. The protein localises to the cytoskeleton. The protein resides in the spindle. It localises to the chromosome. The catalysed reaction is ATP + H2O = ADP + phosphate + H(+). Activated upon binding to double stranded DNA or nucleosomes. In terms of biological role, ATPase component of the chromatin remodeling INO80 complex which is involved in transcriptional regulation, DNA replication and DNA repair. Binds DNA. As part of the INO80 complex, remodels chromatin by shifting nucleosomes. Regulates transcription upon recruitment by YY1 to YY1-activated genes, where it acts as an essential coactivator. Involved in UV-damage excision DNA repair. The contribution to DNA double-strand break repair appears to be largely indirect through transcriptional regulation. Involved in DNA replication. Required for microtubule assembly during mitosis thereby regulating chromosome segregation cycle. In Mus musculus (Mouse), this protein is Chromatin-remodeling ATPase INO80 (Ino80).